Consider the following 126-residue polypeptide: Large ribosomal subunit protein bL19 (126 aa).

This sequence belongs to the bacterial ribosomal protein bL19 family.

This protein is located at the 30S-50S ribosomal subunit interface and may play a role in the structure and function of the aminoacyl-tRNA binding site. This Bordetella petrii (strain ATCC BAA-461 / DSM 12804 / CCUG 43448) protein is Large ribosomal subunit protein bL19.